The chain runs to 187 residues: Dirigent protein 23 (187 aa).

Positions 1–24 (MAKEEYVSRMLVMLIMIMPLVAQG) are cleaved as a signal peptide. The N-linked (GlcNAc...) asparagine glycan is linked to Asn-182.

It belongs to the plant dirigent protein family. Homodimer.

It is found in the secreted. The protein localises to the extracellular space. Its subcellular location is the apoplast. In terms of biological role, dirigent proteins impart stereoselectivity on the phenoxy radical-coupling reaction, yielding optically active lignans from two molecules of coniferyl alcohol in the biosynthesis of lignans, flavonolignans, and alkaloids and thus plays a central role in plant secondary metabolism. This Arabidopsis thaliana (Mouse-ear cress) protein is Dirigent protein 23 (DIR23).